Consider the following 201-residue polypeptide: Holliday junction branch migration complex subunit RuvA (201 aa).

The interval 1-64 (MIGRLRGTLA…EDAQLLYGFA (64 aa)) is domain I. The tract at residues 65-143 (EKRERELFRE…AWESMPAIAT (79 aa)) is domain II. The segment at 144-152 (LVVEPGSKT) is flexible linker. The segment at 153–201 (AVTSAENDAVSALISLGFKPQEASRAVSAIQEENLSSEEMIRRALKGMV) is domain III.

Belongs to the RuvA family. In terms of assembly, homotetramer. Forms an RuvA(8)-RuvB(12)-Holliday junction (HJ) complex. HJ DNA is sandwiched between 2 RuvA tetramers; dsDNA enters through RuvA and exits via RuvB. An RuvB hexamer assembles on each DNA strand where it exits the tetramer. Each RuvB hexamer is contacted by two RuvA subunits (via domain III) on 2 adjacent RuvB subunits; this complex drives branch migration. In the full resolvosome a probable DNA-RuvA(4)-RuvB(12)-RuvC(2) complex forms which resolves the HJ.

The protein localises to the cytoplasm. The RuvA-RuvB-RuvC complex processes Holliday junction (HJ) DNA during genetic recombination and DNA repair, while the RuvA-RuvB complex plays an important role in the rescue of blocked DNA replication forks via replication fork reversal (RFR). RuvA specifically binds to HJ cruciform DNA, conferring on it an open structure. The RuvB hexamer acts as an ATP-dependent pump, pulling dsDNA into and through the RuvAB complex. HJ branch migration allows RuvC to scan DNA until it finds its consensus sequence, where it cleaves and resolves the cruciform DNA. The chain is Holliday junction branch migration complex subunit RuvA from Stutzerimonas stutzeri (strain A1501) (Pseudomonas stutzeri).